A 342-amino-acid polypeptide reads, in one-letter code: Endolytic peptidoglycan transglycosylase RlpA (342 aa).

The signal sequence occupies residues Met-1–Ser-26. A lipid anchor (N-palmitoyl cysteine) is attached at Cys-27. Residue Cys-27 is the site of S-diacylglycerol cysteine attachment. In terms of domain architecture, SPOR spans Ser-261–Asp-342.

Belongs to the RlpA family.

The protein localises to the cell membrane. In terms of biological role, lytic transglycosylase with a strong preference for naked glycan strands that lack stem peptides. The polypeptide is Endolytic peptidoglycan transglycosylase RlpA (Pseudomonas aeruginosa (strain ATCC 15692 / DSM 22644 / CIP 104116 / JCM 14847 / LMG 12228 / 1C / PRS 101 / PAO1)).